Reading from the N-terminus, the 1097-residue chain is DNA-directed RNA polymerase subunit beta (1097 aa).

This sequence belongs to the RNA polymerase beta chain family. In terms of assembly, in plastids the minimal PEP RNA polymerase catalytic core is composed of four subunits: alpha, beta, beta', and beta''. When a (nuclear-encoded) sigma factor is associated with the core the holoenzyme is formed, which can initiate transcription.

It localises to the plastid. It is found in the chloroplast. It catalyses the reaction RNA(n) + a ribonucleoside 5'-triphosphate = RNA(n+1) + diphosphate. Its function is as follows. DNA-dependent RNA polymerase catalyzes the transcription of DNA into RNA using the four ribonucleoside triphosphates as substrates. The polypeptide is DNA-directed RNA polymerase subunit beta (Rhodomonas salina (Cryptomonas salina)).